The primary structure comprises 440 residues: Transposon Ty1-BR Gag polyprotein (440 aa).

Composition is skewed to polar residues over residues 1–10 (MESQQLSNYP), 48–60 (TKANSQQTTTPAS), and 127–152 (QSQFPQYPSSVGTPLSTPSPESGNTF). 3 disordered regions span residues 1-93 (MESQ…MMTQ), 126-173 (PQSQ…RPPP), and 352-440 (GSRN…PETY). The segment covering 153-165 (TDSSSADSDMTST) has biased composition (low complexity). The RNA-binding stretch occupies residues 299–401 (NNGIHINNKV…NSKSKTARAH (103 aa)). A compositionally biased stretch (low complexity) spans 402 to 418 (NVSTSNNSPSTDNDSIS). At serine 416 the chain carries Phosphoserine. The span at 419 to 428 (KSTTEPIQLN) shows a compositional bias: polar residues. Residues 429–440 (NKHDLHLRPETY) show a composition bias toward basic and acidic residues.

As to quaternary structure, homotrimer.

Its subcellular location is the cytoplasm. Its function is as follows. Capsid protein (CA) is the structural component of the virus-like particle (VLP), forming the shell that encapsulates the retrotransposons dimeric RNA genome. The particles are assembled from trimer-clustered units and there are holes in the capsid shells that allow for the diffusion of macromolecules. CA also has nucleocapsid-like chaperone activity, promoting primer tRNA(i)-Met annealing to the multipartite primer-binding site (PBS), dimerization of Ty1 RNA and initiation of reverse transcription. This chain is Transposon Ty1-BR Gag polyprotein (TY1A-BR), found in Saccharomyces cerevisiae (strain ATCC 204508 / S288c) (Baker's yeast).